A 26-amino-acid polypeptide reads, in one-letter code: FLWGALIKGAGKLISRVVGSLKKKKQ.

The protein belongs to the non-disulfide-bridged peptide (NDBP) superfamily. Medium-length antimicrobial peptide (group 3) family. Ponericin-W subfamily. As to expression, expressed by the venom gland.

The protein localises to the secreted. It is found in the target cell membrane. Functionally, has a broad spectrum of activity against both Gram-positive and Gram-negative bacteria and S.cerevisiae. Has insecticidal and hemolytic activities. May act by disrupting the integrity of the bacterial cell membrane. This Neoponera inversa (Ant) protein is U1-poneritoxin-Ni1b.